We begin with the raw amino-acid sequence, 348 residues long: tRNA N6-adenosine threonylcarbamoyltransferase (348 aa).

Histidine 115 and histidine 119 together coordinate Fe cation. Residues 137–141, aspartate 170, glycine 183, and asparagine 281 contribute to the substrate site; that span reads LASGG. Aspartate 309 contacts Fe cation.

This sequence belongs to the KAE1 / TsaD family. It depends on Fe(2+) as a cofactor.

The protein resides in the cytoplasm. The catalysed reaction is L-threonylcarbamoyladenylate + adenosine(37) in tRNA = N(6)-L-threonylcarbamoyladenosine(37) in tRNA + AMP + H(+). Functionally, required for the formation of a threonylcarbamoyl group on adenosine at position 37 (t(6)A37) in tRNAs that read codons beginning with adenine. Is involved in the transfer of the threonylcarbamoyl moiety of threonylcarbamoyl-AMP (TC-AMP) to the N6 group of A37, together with TsaE and TsaB. TsaD likely plays a direct catalytic role in this reaction. The chain is tRNA N6-adenosine threonylcarbamoyltransferase from Methylobacterium sp. (strain 4-46).